We begin with the raw amino-acid sequence, 40 residues long: GLAYEYLEQDLGKKSELLLAANPVHKVYDFVXGMKPEVAK.

It belongs to the GST superfamily. HSP26 family.

The chain is Unknown protein from spot 207 of 2D-PAGE of etiolated coleoptile from Zea mays (Maize).